The primary structure comprises 689 residues: Sodium-dependent phosphate transport protein 2B (689 aa).

Residues 1-41 (MAPWPELGDAQPNPDKYLEGAAGQQPTAPDKSKETNKNNTE) form a disordered region. The Cytoplasmic segment spans residues 1 to 100 (MAPWPELGDA…LCVFQGIGRL (100 aa)). The helical transmembrane segment at 101 to 121 (ILLLGFLYFFVCSLDILSSAF) threads the bilayer. Over 122 to 135 (QLVGGKMAGQFFSN) the chain is Extracellular. A helical membrane pass occupies residues 136-156 (SSIMSNPLLGLVIGVLVTVLV). The Cytoplasmic segment spans residues 157–212 (QSSSTSTSIVVSMVSSSLLTVRAAIPIIMGANIGTSITNTIVALMQVGDRSEFRRA). The helical transmembrane segment at 213–233 (FAGATVHDFFNWLSVLVLLPV) threads the bilayer. The Extracellular portion of the chain corresponds to 234–362 (EVATHYLEII…FVNFHLPDLA (129 aa)). 3 N-linked (GlcNAc...) asparagine glycosylation sites follow: N294, N307, and N320. The cysteines at positions 302 and 349 are disulfide-linked. A helical membrane pass occupies residues 363–383 (VGTILLILSLLVLCGCLIMIV). Topologically, residues 384-407 (KILGSVLKGQVATVIKKTINTDFP) are cytoplasmic. Residues 408–428 (FPFAWLTGYLAILVGAGMTFI) traverse the membrane as a helical segment. Topologically, residues 429–485 (VQSSSVFTSALTPLIGIGVITIERAYPLTLGSNIGTTTTAILAALASPGNALRSSLQ) are extracellular. Residues 486–506 (IALCHFFFNISGILLWYPIPF) form a helical membrane-spanning segment. Residues 507-525 (TRLPIRMAKGLGNISAKYR) are Cytoplasmic-facing. The helical transmembrane segment at 526 to 546 (WFAVFYLIIFFFLIPLTVFGL) threads the bilayer. Over 547-552 (SLAGWR) the chain is Extracellular. The helical transmembrane segment at 553-573 (VLVGVGVPVVFIIILVLCLRL) threads the bilayer. The Cytoplasmic portion of the chain corresponds to 574-687 (LQSRCPRVLP…PASDSKTECT (114 aa)).

The protein belongs to the SLC34A transporter family.

The protein localises to the apical cell membrane. It catalyses the reaction 3 Na(+)(out) + phosphate(out) = 3 Na(+)(in) + phosphate(in). Functionally, involved in actively transporting phosphate into cells via Na(+) cotransport. This is Sodium-dependent phosphate transport protein 2B (SLC34A2) from Pongo abelii (Sumatran orangutan).